We begin with the raw amino-acid sequence, 487 residues long: Kynureninase 1 (487 aa).

Pyridoxal 5'-phosphate-binding positions include Leu149, Thr150, 177 to 180 (FPSD), Ser234, Asp263, His266, and Tyr288. At Lys289 the chain carries N6-(pyridoxal phosphate)lysine. Pyridoxal 5'-phosphate contacts are provided by Trp329 and Asn357.

It belongs to the kynureninase family. As to quaternary structure, homodimer. Pyridoxal 5'-phosphate serves as cofactor.

It is found in the cytoplasm. The enzyme catalyses L-kynurenine + H2O = anthranilate + L-alanine + H(+). It catalyses the reaction 3-hydroxy-L-kynurenine + H2O = 3-hydroxyanthranilate + L-alanine + H(+). Its pathway is amino-acid degradation; L-kynurenine degradation; L-alanine and anthranilate from L-kynurenine: step 1/1. It functions in the pathway cofactor biosynthesis; NAD(+) biosynthesis; quinolinate from L-kynurenine: step 2/3. Functionally, catalyzes the cleavage of L-kynurenine (L-Kyn) and L-3-hydroxykynurenine (L-3OHKyn) into anthranilic acid (AA) and 3-hydroxyanthranilic acid (3-OHAA), respectively. The protein is Kynureninase 1 (bna5-1) of Emericella nidulans (strain FGSC A4 / ATCC 38163 / CBS 112.46 / NRRL 194 / M139) (Aspergillus nidulans).